Consider the following 583-residue polypeptide: 5-aminolevulinate synthase, erythroid-specific, mitochondrial (583 aa).

Position 158 (R158) interacts with succinyl-CoA. 2 residues coordinate pyridoxal 5'-phosphate: C253 and F254. The succinyl-CoA site is built by S275 and R294. 3 residues coordinate pyridoxal 5'-phosphate: S327, H355, and T383. K386 is a catalytic residue. Residue K386 is modified to N6-(pyridoxal phosphate)lysine. Pyridoxal 5'-phosphate contacts are provided by T415 and T416. A succinyl-CoA-binding site is contributed by T503.

The protein belongs to the class-II pyridoxal-phosphate-dependent aminotransferase family. In terms of assembly, homodimer. The cofactor is pyridoxal 5'-phosphate.

It is found in the mitochondrion inner membrane. It carries out the reaction succinyl-CoA + glycine + H(+) = 5-aminolevulinate + CO2 + CoA. It participates in porphyrin-containing compound metabolism; protoporphyrin-IX biosynthesis; 5-aminolevulinate from glycine: step 1/1. Functionally, catalyzes the pyridoxal 5'-phosphate (PLP)-dependent condensation of succinyl-CoA and glycine to form aminolevulinic acid (ALA), with CoA and CO2 as by-products. Contributes significantly to heme formation during erythropoiesis. This chain is 5-aminolevulinate synthase, erythroid-specific, mitochondrial (alas2), found in Danio rerio (Zebrafish).